Consider the following 155-residue polypeptide: Low molecular weight phosphotyrosine protein phosphatase 1 (155 aa).

Cysteine 9 acts as the Nucleophile in catalysis. Arginine 15 is a catalytic residue. The active-site Proton donor is the aspartate 124.

The protein belongs to the low molecular weight phosphotyrosine protein phosphatase family. Cone cells and primary pigment cells in developing pupal retina.

The protein localises to the cytoplasm. The catalysed reaction is O-phospho-L-tyrosyl-[protein] + H2O = L-tyrosyl-[protein] + phosphate. It carries out the reaction a phosphate monoester + H2O = an alcohol + phosphate. Acts on tyrosine phosphorylated proteins, low-MW aryl phosphates and natural and synthetic acyl phosphates. The chain is Low molecular weight phosphotyrosine protein phosphatase 1 (primo-1) from Drosophila melanogaster (Fruit fly).